The following is a 1188-amino-acid chain: uncharacterized protein (1188 aa).

3 helical membrane-spanning segments follow: residues Phe-73–Met-93, Ile-878–Ile-898, and Val-1089–Ile-1109.

Its subcellular location is the membrane. This is an uncharacterized protein from Saccharomyces cerevisiae (strain ATCC 204508 / S288c) (Baker's yeast).